The chain runs to 933 residues: Phospholipase D2 (933 aa).

Disordered regions lie at residues 1 to 20 (MAAT…SSQL) and 134 to 160 (SPAP…RRTA). The 131-residue stretch at 65-195 (VIAQVVGTER…TEFLEVSQLS (131 aa)) folds into the PX domain. Residues 203-311 (KGLEGVIRKR…WAQEITELAQ (109 aa)) form the PH domain. 2 consecutive PLD phosphodiesterase domains span residues 437–464 (TLWA…AYGR) and 751–778 (ELIY…NDRS). Positions 441 to 788 (HHEKLLVVDQ…LLGKRDSELA (348 aa)) are catalytic.

Belongs to the phospholipase D family. As to quaternary structure, interacts with PIP5K1B. Interacts with EGFR. Phosphorylated by FGR.

Its subcellular location is the cell membrane. It catalyses the reaction a 1,2-diacyl-sn-glycero-3-phosphocholine + H2O = a 1,2-diacyl-sn-glycero-3-phosphate + choline + H(+). The enzyme catalyses 1,2-dihexadecanoyl-sn-glycero-3-phosphocholine + H2O = 1,2-dihexadecanoyl-sn-glycero-3-phosphate + choline + H(+). Function as phospholipase selective for phosphatidylcholine. May have a role in signal-induced cytoskeletal regulation and/or endocytosis. The sequence is that of Phospholipase D2 (PLD2) from Bos taurus (Bovine).